The following is a 203-amino-acid chain: Ribosomal RNA large subunit methyltransferase E (203 aa).

S-adenosyl-L-methionine contacts are provided by Gly-59, Trp-61, Asp-79, Asp-97, and Asp-119. The Proton acceptor role is filled by Lys-159.

The protein belongs to the class I-like SAM-binding methyltransferase superfamily. RNA methyltransferase RlmE family.

It is found in the cytoplasm. The enzyme catalyses uridine(2552) in 23S rRNA + S-adenosyl-L-methionine = 2'-O-methyluridine(2552) in 23S rRNA + S-adenosyl-L-homocysteine + H(+). Functionally, specifically methylates the uridine in position 2552 of 23S rRNA at the 2'-O position of the ribose in the fully assembled 50S ribosomal subunit. The chain is Ribosomal RNA large subunit methyltransferase E from Desulforapulum autotrophicum (strain ATCC 43914 / DSM 3382 / VKM B-1955 / HRM2) (Desulfobacterium autotrophicum).